The following is a 657-amino-acid chain: Glycogen debranching enzyme (657 aa).

Aspartate 334 acts as the Nucleophile in catalysis. Glutamate 369 (proton donor) is an active-site residue. The disordered stretch occupies residues 458–485; sequence ANGEQNRDGTNSNFSFNHGTEGLEADET. Residues 465–475 show a composition bias toward polar residues; sequence DGTNSNFSFNH.

It belongs to the glycosyl hydrolase 13 family.

The protein resides in the cytoplasm. It carries out the reaction Hydrolysis of (1-&gt;6)-alpha-D-glucosidic linkages to branches with degrees of polymerization of three or four glucose residues in limit dextrin.. Its pathway is glycan degradation; glycogen degradation. Its activity is regulated as follows. Slightly activated by Ca(2+). Inhibited by divalent cations such as Zn(2+), Cu(2+), Fe(2+), Mg(2+), Mn(2+), but only slightly inhibited by EDTA. Removes maltotriose and maltotetraose chains that are attached by 1,6-alpha-linkage to the limit dextrin main chain, generating a debranched limit dextrin. Hydrolyzes the alpha-1,6-glycosidic linkages in amylopectin while does not hydrolyze the alpha-1,4-glycosidic linkages in amylose. Native glycogen is a poor substrate. The sequence is that of Glycogen debranching enzyme from Dickeya chrysanthemi (Pectobacterium chrysanthemi).